We begin with the raw amino-acid sequence, 612 residues long: Sulfite reductase [NADPH] hemoprotein beta-component (612 aa).

The disordered stretch occupies residues 1 to 32 (MDDHKPIDTPDGPAVDTPGIGAHRYEAPPTDR). Residues cysteine 469, cysteine 475, cysteine 514, and cysteine 518 each contribute to the [4Fe-4S] cluster site. Position 518 (cysteine 518) interacts with siroheme.

The protein belongs to the nitrite and sulfite reductase 4Fe-4S domain family. As to quaternary structure, alpha(8)-beta(8). The alpha component is a flavoprotein, the beta component is a hemoprotein. Requires siroheme as cofactor. [4Fe-4S] cluster is required as a cofactor.

It catalyses the reaction hydrogen sulfide + 3 NADP(+) + 3 H2O = sulfite + 3 NADPH + 4 H(+). The protein operates within sulfur metabolism; hydrogen sulfide biosynthesis; hydrogen sulfide from sulfite (NADPH route): step 1/1. Component of the sulfite reductase complex that catalyzes the 6-electron reduction of sulfite to sulfide. This is one of several activities required for the biosynthesis of L-cysteine from sulfate. This is Sulfite reductase [NADPH] hemoprotein beta-component from Methylorubrum populi (strain ATCC BAA-705 / NCIMB 13946 / BJ001) (Methylobacterium populi).